Consider the following 305-residue polypeptide: Serine/threonine-protein phosphatase 6 catalytic subunit (305 aa).

Met-1 carries the N-acetylmethionine modification. Mn(2+)-binding residues include Asp-53, His-55, Asp-81, and Asn-113. Catalysis depends on His-114, which acts as the Proton donor. Mn(2+) is bound by residues His-163 and His-237.

The protein belongs to the PPP phosphatase family. PP-6 (PP-V) subfamily. As to quaternary structure, protein phosphatase 6 (PP6) holoenzyme is proposed to be a heterotrimeric complex formed by the catalytic subunit, a SAPS domain-containing subunit (PP6R) and an ankyrin repeat-domain containing regulatory subunit (ARS). Interacts with subunits PPP6R1, PPP6R2 and PPP6R3. Interacts with subunit ANKRD28. Interacts with IGBP1. Interacts with MAP3K7. Interacts with NFKBIE. Interacts with TRIM14 and WRNIP1; these interactions positively regulate the RIG-I signaling pathway. Requires Mn(2+) as cofactor. In terms of tissue distribution, ubiquitously expressed in all tissues tested with strongest expression in lung, spleen, liver, kidney and brain. Weaker expression observed in bladder, pancreas, heart and skeletal muscle.

The protein localises to the mitochondrion. It is found in the cytoplasm. The catalysed reaction is O-phospho-L-seryl-[protein] + H2O = L-seryl-[protein] + phosphate. It carries out the reaction O-phospho-L-threonyl-[protein] + H2O = L-threonyl-[protein] + phosphate. Its function is as follows. Catalytic subunit of protein phosphatase 6 (PP6). PP6 is a component of a signaling pathway regulating cell cycle progression in response to IL2 receptor stimulation. N-terminal domain restricts G1 to S phase progression in cancer cells, in part through control of cyclin D13 During mitosis, regulates spindle positioning. Down-regulates MAP3K7 kinase activation of the IL1 signaling pathway by dephosphorylation of MAP3K7. Acts as a regulator of innate immunity by mediating dephosphorylation CGAS, STING1 and RIGI. Also participates in the innate immune defense against viruses by desphosphorylating RIGI, an essential step that triggers RIGI-mediated signaling activation. Also regulates innate immunity by acting as a negative regulator of the cGAS-STING pathway: mediates dephosphorylation and inactivation of CGAS and STING1. CGAS dephosphorylation at 'Ser-420' impairs its ability to bind GTP, thereby inactivating it. This is Serine/threonine-protein phosphatase 6 catalytic subunit from Mus musculus (Mouse).